Reading from the N-terminus, the 604-residue chain is Kelch-like protein 20 (604 aa).

Positions 63 to 130 (CDVVLVVGAK…AYTSQITVEE (68 aa)) constitute a BTB domain. The BACK domain maps to 165-267 (CLGIRAFADT…SPKFLVGTVG (103 aa)). 6 Kelch repeats span residues 314–360 (VLFA…VLDD), 362–408 (LYAV…VLGG), 409–455 (FLYA…VLGG), 457–502 (LYAV…VYQD), 504–549 (IYAV…VVNG), and 551–596 (LMAV…VIKM).

As to quaternary structure, component of the BCR(KLHL20) E3 ubiquitin ligase complex, at least composed of CUL3, KLHL20 and RBX1. Interacts with PDZ-RhoGEF/ARHGEF11, DAPK1, PML and CORO7. Interacts with F-actin. Interacts with IFN-gamma (IFNG). Interacts (via kelch repeats) with IVNS1ABP (via kelch repeats); this interaction blocks the assembly of CUL3-KLHL20 complex.

Its subcellular location is the cytoplasm. It localises to the perinuclear region. It is found in the nucleus. The protein localises to the golgi apparatus. The protein resides in the trans-Golgi network. Its subcellular location is the cell projection. It localises to the axon. It is found in the dendrite. It participates in protein modification; protein ubiquitination. Substrate-specific adapter of a BCR (BTB-CUL3-RBX1) E3 ubiquitin-protein ligase complex involved in interferon response and anterograde Golgi to endosome transport. The BCR(KLHL20) E3 ubiquitin ligase complex mediates the ubiquitination of DAPK1, leading to its degradation by the proteasome, thereby acting as a negative regulator of apoptosis. The BCR(KLHL20) E3 ubiquitin ligase complex also specifically mediates 'Lys-33'-linked ubiquitination. Involved in anterograde Golgi to endosome transport by mediating 'Lys-33'-linked ubiquitination of CORO7, promoting interaction between CORO7 and EPS15, thereby facilitating actin polymerization and post-Golgi trafficking. Also acts as a regulator of endothelial migration during angiogenesis by controlling the activation of Rho GTPases. The BCR(KLHL20) E3 ubiquitin ligase complex acts as a regulator of neurite outgrowth by mediating ubiquitination and degradation of PDZ-RhoGEF/ARHGEF11. The polypeptide is Kelch-like protein 20 (Klhl20) (Mus musculus (Mouse)).